The sequence spans 84 residues: MKGMILFISCLLLIDIVVGGKEGYLMDHEGCKLSCFIRPSGYCGRECTLKKGSSGYCAWPACYCYGLPNWVKVWDRATNKCGKK.

An N-terminal signal peptide occupies residues 1–19 (MKGMILFISCLLLIDIVVG). The LCN-type CS-alpha/beta domain maps to 21 to 82 (KEGYLMDHEG…VWDRATNKCG (62 aa)). 4 cysteine pairs are disulfide-bonded: Cys31–Cys81, Cys35–Cys57, Cys43–Cys62, and Cys47–Cys64. Cys81 carries the post-translational modification Cysteine amide.

Expressed by the venom gland.

Its subcellular location is the secreted. Beta toxins bind voltage-independently at site-4 of sodium channels (Nav) and shift the voltage of activation toward more negative potentials thereby affecting sodium channel activation and promoting spontaneous and repetitive firing. This toxin is active only on mammals. Is toxic to mice. The chain is Toxin Tst1 from Tityus stigmurus (Brazilian scorpion).